Reading from the N-terminus, the 283-residue chain is 4-hydroxy-3-methylbut-2-enyl diphosphate reductase (283 aa).

Cys-12 lines the [4Fe-4S] cluster pocket. Residues His-40 and His-73 each contribute to the (2E)-4-hydroxy-3-methylbut-2-enyl diphosphate site. 2 residues coordinate dimethylallyl diphosphate: His-40 and His-73. His-40 and His-73 together coordinate isopentenyl diphosphate. Residue Cys-95 participates in [4Fe-4S] cluster binding. His-123 lines the (2E)-4-hydroxy-3-methylbut-2-enyl diphosphate pocket. His-123 serves as a coordination point for dimethylallyl diphosphate. Position 123 (His-123) interacts with isopentenyl diphosphate. Glu-125 acts as the Proton donor in catalysis. Thr-161 is a binding site for (2E)-4-hydroxy-3-methylbut-2-enyl diphosphate. Position 189 (Cys-189) interacts with [4Fe-4S] cluster. (2E)-4-hydroxy-3-methylbut-2-enyl diphosphate is bound by residues Ser-217, Asn-219, and Ser-261. Dimethylallyl diphosphate contacts are provided by Ser-217, Asn-219, and Ser-261. Residues Ser-217, Asn-219, and Ser-261 each coordinate isopentenyl diphosphate.

This sequence belongs to the IspH family. [4Fe-4S] cluster is required as a cofactor.

The enzyme catalyses isopentenyl diphosphate + 2 oxidized [2Fe-2S]-[ferredoxin] + H2O = (2E)-4-hydroxy-3-methylbut-2-enyl diphosphate + 2 reduced [2Fe-2S]-[ferredoxin] + 2 H(+). It carries out the reaction dimethylallyl diphosphate + 2 oxidized [2Fe-2S]-[ferredoxin] + H2O = (2E)-4-hydroxy-3-methylbut-2-enyl diphosphate + 2 reduced [2Fe-2S]-[ferredoxin] + 2 H(+). The protein operates within isoprenoid biosynthesis; dimethylallyl diphosphate biosynthesis; dimethylallyl diphosphate from (2E)-4-hydroxy-3-methylbutenyl diphosphate: step 1/1. It functions in the pathway isoprenoid biosynthesis; isopentenyl diphosphate biosynthesis via DXP pathway; isopentenyl diphosphate from 1-deoxy-D-xylulose 5-phosphate: step 6/6. Functionally, catalyzes the conversion of 1-hydroxy-2-methyl-2-(E)-butenyl 4-diphosphate (HMBPP) into a mixture of isopentenyl diphosphate (IPP) and dimethylallyl diphosphate (DMAPP). Acts in the terminal step of the DOXP/MEP pathway for isoprenoid precursor biosynthesis. The chain is 4-hydroxy-3-methylbut-2-enyl diphosphate reductase from Citrifermentans bemidjiense (strain ATCC BAA-1014 / DSM 16622 / JCM 12645 / Bem) (Geobacter bemidjiensis).